We begin with the raw amino-acid sequence, 454 residues long: Mitochondrial dynamics protein MID49 (454 aa).

Topologically, residues 1-22 (MAEFSQKRGKRRSDEGLGSMVD) are mitochondrial intermembrane. Ser-13 carries the post-translational modification Phosphoserine. Residues 23-43 (FLLANARLVLGVGGAAVLGIA) traverse the membrane as a helical segment. The Cytoplasmic portion of the chain corresponds to 44-454 (TLAVKRFIDR…SGLQEPEGLL (411 aa)). The interval 76–119 (ATPHLQPRPPPAALSQPVLPLAPSSSAPEGPAETDPEVTPQLSS) is disordered. Over residues 88–103 (ALSQPVLPLAPSSSAP) the composition is skewed to low complexity.

This sequence belongs to the MID49/MID51 family. Interacts with DNM1L. As to expression, expressed in all tissues tested with highest expression in heart and skeletal muscle.

It localises to the mitochondrion outer membrane. Mitochondrial outer membrane protein involved in the regulation of mitochondrial organization. It is required for mitochondrial fission and promotes the recruitment and association of the fission mediator dynamin-related protein 1 (DNM1L) to the mitochondrial surface independently of the mitochondrial fission FIS1 and MFF proteins. Regulates DNM1L GTPase activity. The protein is Mitochondrial dynamics protein MID49 (MIEF2) of Homo sapiens (Human).